The sequence spans 582 residues: Aspartate--tRNA(Asp/Asn) ligase (582 aa).

Glu-177 contributes to the L-aspartate binding site. Residues 201 to 204 (QLFK) form an aspartate region. Arg-223 serves as a coordination point for L-aspartate. Residues 223–225 (RDE) and Gln-232 contribute to the ATP site. His-447 is a binding site for L-aspartate. Residue Glu-481 participates in ATP binding. Arg-488 is an L-aspartate binding site. ATP is bound at residue 533–536 (GLDR).

Belongs to the class-II aminoacyl-tRNA synthetase family. Type 1 subfamily. Homodimer.

Its subcellular location is the cytoplasm. The enzyme catalyses tRNA(Asx) + L-aspartate + ATP = L-aspartyl-tRNA(Asx) + AMP + diphosphate. Its function is as follows. Aspartyl-tRNA synthetase with relaxed tRNA specificity since it is able to aspartylate not only its cognate tRNA(Asp) but also tRNA(Asn). Reaction proceeds in two steps: L-aspartate is first activated by ATP to form Asp-AMP and then transferred to the acceptor end of tRNA(Asp/Asn). This Chlamydia muridarum (strain MoPn / Nigg) protein is Aspartate--tRNA(Asp/Asn) ligase.